The primary structure comprises 497 residues: C4-dicarboxylate transport protein (497 aa).

The next 8 membrane-spanning stretches (helical) occupy residues 27-45 (LYVQ…GYFY), 60-82 (IMLV…IAGM), 95-117 (AMIY…ANVV), 168-185 (ILQV…LAIV), 205-227 (RLVA…FTIG), 237-259 (LAML…LGAV), 348-370 (ILLL…AGFI), and 374-393 (ATLS…ILGI). The disordered stretch occupies residues 466–497 (ADRTLAGRPGGRDSRRIAPDHSAQVFGGPLSL). Residues 475–484 (GGRDSRRIAP) show a composition bias toward basic and acidic residues.

The protein belongs to the dicarboxylate/amino acid:cation symporter (DAACS) (TC 2.A.23) family.

The protein localises to the cell inner membrane. In terms of biological role, responsible for the transport of dicarboxylates such as succinate, fumarate, and malate from the periplasm across the inner membrane. This transport system plays an essential role in the energy supply of tropical rhizobium-legume symbionts. This Sinorhizobium fredii (strain NBRC 101917 / NGR234) protein is C4-dicarboxylate transport protein (dctA1).